The primary structure comprises 264 residues: S-adenosylmethionine decarboxylase proenzyme (264 aa).

Ser113 acts as the Schiff-base intermediate with substrate; via pyruvic acid in catalysis. Pyruvic acid (Ser); by autocatalysis is present on Ser113. His118 functions as the Proton acceptor; for processing activity in the catalytic mechanism. Cys141 serves as the catalytic Proton donor; for catalytic activity.

This sequence belongs to the prokaryotic AdoMetDC family. Type 2 subfamily. In terms of assembly, heterooctamer of four alpha and four beta chains arranged as a tetramer of alpha/beta heterodimers. Pyruvate serves as cofactor. Is synthesized initially as an inactive proenzyme. Formation of the active enzyme involves a self-maturation process in which the active site pyruvoyl group is generated from an internal serine residue via an autocatalytic post-translational modification. Two non-identical subunits are generated from the proenzyme in this reaction, and the pyruvate is formed at the N-terminus of the alpha chain, which is derived from the carboxyl end of the proenzyme. The post-translation cleavage follows an unusual pathway, termed non-hydrolytic serinolysis, in which the side chain hydroxyl group of the serine supplies its oxygen atom to form the C-terminus of the beta chain, while the remainder of the serine residue undergoes an oxidative deamination to produce ammonia and the pyruvoyl group blocking the N-terminus of the alpha chain.

It catalyses the reaction S-adenosyl-L-methionine + H(+) = S-adenosyl 3-(methylsulfanyl)propylamine + CO2. The protein operates within amine and polyamine biosynthesis; S-adenosylmethioninamine biosynthesis; S-adenosylmethioninamine from S-adenosyl-L-methionine: step 1/1. Catalyzes the decarboxylation of S-adenosylmethionine to S-adenosylmethioninamine (dcAdoMet), the propylamine donor required for the synthesis of the polyamines spermine and spermidine from the diamine putrescine. The protein is S-adenosylmethionine decarboxylase proenzyme of Pseudomonas aeruginosa (strain ATCC 15692 / DSM 22644 / CIP 104116 / JCM 14847 / LMG 12228 / 1C / PRS 101 / PAO1).